Here is a 244-residue protein sequence, read N- to C-terminus: MSTDMETAVVGKVDPEAPQPTHIDVHIHQESALAKLLLAGCSLLRIPASASTQSQGSSRVLVASWVVQTVLGALSVVLGGTLYIGHYLAMYSEGAPFWTGIVAMLAGAVAFLHKKRGGTCWALMRTLLVLASFCTAVAAIVIGSRELNFYWYFLGDDVCQRDSSYGWSTMPRTTPVPEEADRIALCIYYTSMLKTLLMSLQAMLLGIWVLLLLASLTPVCVYIWKRFFTKAETEEKKLLGAAVI.

Ser-42 is subject to Phosphoserine. Helical transmembrane passes span 60 to 80 (VLVA…VLGG), 92 to 112 (SEGA…VAFL), 122 to 142 (ALMR…AIVI), and 204 to 224 (LLGI…VYIW).

Belongs to the TMEM176 family. Interacts with MCOLN2. Specifically expressed in lung, kidney and spleen.

The protein localises to the membrane. The polypeptide is Transmembrane protein 176A (Tmem176a) (Mus musculus (Mouse)).